An 84-amino-acid chain; its full sequence is UPF0248 protein PF1300 (84 aa).

This sequence belongs to the UPF0248 family.

In Pyrococcus furiosus (strain ATCC 43587 / DSM 3638 / JCM 8422 / Vc1), this protein is UPF0248 protein PF1300.